The sequence spans 469 residues: Diacetylchitobiose binding protein NgcE (469 aa).

Residues 1 to 37 constitute a signal peptide (tat-type signal); it reads MTIRAGSLDRRTLLRGAIATAAMGSFAVACSSPSSED. A disordered region spans residues 30 to 54; sequence CSSPSSEDKESDSGPKGEKSANNPF. Over residues 35–48 the composition is skewed to basic and acidic residues; it reads SEDKESDSGPKGEK.

This sequence belongs to the bacterial solute-binding protein 1 family. In terms of assembly, the complex is composed of two ATP-binding proteins (MsiK), two transmembrane proteins (NgcF and NgcG) and a solute-binding protein (NgcE). Post-translationally, predicted to be exported by the Tat system. The position of the signal peptide cleavage has not been experimentally proven.

Its subcellular location is the cell membrane. Its function is as follows. Part of the ABC transporter complex NgcEFG-MsiK involved in N,N'-diacetylchitobiose ((GlcNAc)2) uptake. Binds (GlcNAc)2. Can also bind GlcNAc. This chain is Diacetylchitobiose binding protein NgcE, found in Streptomyces coelicolor (strain ATCC BAA-471 / A3(2) / M145).